Here is a 307-residue protein sequence, read N- to C-terminus: Ribonuclease Z (307 aa).

7 residues coordinate Zn(2+): His-63, His-65, Asp-67, His-68, His-141, Asp-212, and His-270. Residue Asp-67 is the Proton acceptor of the active site.

The protein belongs to the RNase Z family. In terms of assembly, homodimer. The cofactor is Zn(2+).

It carries out the reaction Endonucleolytic cleavage of RNA, removing extra 3' nucleotides from tRNA precursor, generating 3' termini of tRNAs. A 3'-hydroxy group is left at the tRNA terminus and a 5'-phosphoryl group is left at the trailer molecule.. Functionally, zinc phosphodiesterase, which displays some tRNA 3'-processing endonuclease activity. Probably involved in tRNA maturation, by removing a 3'-trailer from precursor tRNA. The chain is Ribonuclease Z from Bacillus thuringiensis subsp. konkukian (strain 97-27).